The following is a 513-amino-acid chain: ATP synthase subunit alpha (513 aa).

An ATP-binding site is contributed by 169 to 176 (GDRQTGKT).

This sequence belongs to the ATPase alpha/beta chains family. F-type ATPases have 2 components, CF(1) - the catalytic core - and CF(0) - the membrane proton channel. CF(1) has five subunits: alpha(3), beta(3), gamma(1), delta(1), epsilon(1). CF(0) has three main subunits: a(1), b(2) and c(9-12). The alpha and beta chains form an alternating ring which encloses part of the gamma chain. CF(1) is attached to CF(0) by a central stalk formed by the gamma and epsilon chains, while a peripheral stalk is formed by the delta and b chains.

The protein resides in the cell inner membrane. It carries out the reaction ATP + H2O + 4 H(+)(in) = ADP + phosphate + 5 H(+)(out). Functionally, produces ATP from ADP in the presence of a proton gradient across the membrane. The alpha chain is a regulatory subunit. This Cupriavidus necator (strain ATCC 17699 / DSM 428 / KCTC 22496 / NCIMB 10442 / H16 / Stanier 337) (Ralstonia eutropha) protein is ATP synthase subunit alpha.